A 138-amino-acid polypeptide reads, in one-letter code: Superoxide dismutase [Mn] (138 aa).

Mn(2+) contacts are provided by His-1, His-49, Asp-133, and His-137.

Belongs to the iron/manganese superoxide dismutase family. Requires Mn(2+) as cofactor.

The enzyme catalyses 2 superoxide + 2 H(+) = H2O2 + O2. In terms of biological role, destroys superoxide anion radicals which are normally produced within the cells and which are toxic to biological systems. In Mycobacterium malmoense, this protein is Superoxide dismutase [Mn] (sodA).